A 224-amino-acid polypeptide reads, in one-letter code: Peroxiredoxin-6 (224 aa).

Residues 5–169 enclose the Thioredoxin domain; the sequence is LLLGDEAPNF…ILRVVISLQL (165 aa). Positions 31 to 40 are required and sufficient for targeting to lysosomes and lamellar bodies; that stretch reads DSWGILFSHP. Position 44 is a phosphothreonine (T44). C47 acts as the Cysteine sulfenic acid (-SOH) intermediate; for peroxidase activity in catalysis. N6-acetyllysine is present on K63. Y89 carries the phosphotyrosine modification. The For phospholipase activity role is filled by D140. T177 carries the phosphothreonine; by MAPK modification. Position 209 is an N6-acetyllysine; alternate (K209). K209 is subject to N6-succinyllysine; alternate.

This sequence belongs to the peroxiredoxin family. Prx6 subfamily. As to quaternary structure, homodimer. Interacts with GSTP1; mediates PRDX6 glutathionylation and regeneration. Interacts with APEX1. Interacts with STH. May interact with FAM168B. May interact with HTR2A. In terms of processing, irreversibly inactivated by overoxidation of Cys-47 to sulfinic acid (Cys-SO(2)H) and sulfonic acid (Cys-SO(3)H) forms upon oxidative stress. Phosphorylation at Thr-177 by MAP kinases increases the phospholipase activity of the enzyme. The phosphorylated form exhibits a greater lysophosphatidylcholine acyltransferase activity compared to the non-phosphorylated form.

Its subcellular location is the cytoplasm. The protein resides in the lysosome. It carries out the reaction a hydroperoxide + 2 glutathione = an alcohol + glutathione disulfide + H2O. It catalyses the reaction a 1,2-diacyl-sn-glycero-3-phosphocholine + H2O = a 1-acyl-sn-glycero-3-phosphocholine + a fatty acid + H(+). The enzyme catalyses a 1-acyl-sn-glycero-3-phosphocholine + an acyl-CoA = a 1,2-diacyl-sn-glycero-3-phosphocholine + CoA. The catalysed reaction is 1-hexadecanoyl-sn-glycero-3-phosphocholine + hexadecanoyl-CoA = 1,2-dihexadecanoyl-sn-glycero-3-phosphocholine + CoA. It carries out the reaction 1,2-dihexadecanoyl-sn-glycero-3-phosphocholine + H2O = 1-hexadecanoyl-sn-glycero-3-phosphocholine + hexadecanoate + H(+). Thiol-specific peroxidase that catalyzes the reduction of hydrogen peroxide and organic hydroperoxides to water and alcohols, respectively. Can reduce H(2)O(2) and short chain organic, fatty acid, and phospholipid hydroperoxides. Also has phospholipase activity, and can therefore either reduce the oxidized sn-2 fatty acyl group of phospholipids (peroxidase activity) or hydrolyze the sn-2 ester bond of phospholipids (phospholipase activity). These activities are dependent on binding to phospholipids at acidic pH and to oxidized phospholipds at cytosolic pH. Plays a role in cell protection against oxidative stress by detoxifying peroxides and in phospholipid homeostasis. Exhibits acyl-CoA-dependent lysophospholipid acyltransferase which mediates the conversion of lysophosphatidylcholine (1-acyl-sn-glycero-3-phosphocholine or LPC) into phosphatidylcholine (1,2-diacyl-sn-glycero-3-phosphocholine or PC). Shows a clear preference for LPC as the lysophospholipid and for palmitoyl CoA as the fatty acyl substrate. The chain is Peroxiredoxin-6 (PRDX6) from Macaca fascicularis (Crab-eating macaque).